The primary structure comprises 1180 residues: Chitin synthase 6 (1180 aa).

The next 2 membrane-spanning stretches (helical) occupy residues 108–128 and 374–394; these read FTICAIIFWLCAIILFYIIAF and LLLAFSVLLVTTVLAKFIAAL. N737 carries an N-linked (GlcNAc...) asparagine glycan. A run of 3 helical transmembrane segments spans residues 762–782, 795–815, and 822–842; these read FIVFIDLLGTVILPATAVYLV, IPYISIAMIAAVYGLQAILFL, and YIGWLVIYILAYPVFSFFLPI. The 58-residue stretch at 1118-1175 folds into the DEK-C domain; sequence DPTDEEIKSAVQTYLANQPSLMNVTKRSVREALVAAFPNAELSYKKSMINKAIDDTLS.

This sequence belongs to the chitin synthase family. Class V subfamily.

It is found in the cell membrane. Its subcellular location is the cytoplasmic vesicle membrane. It catalyses the reaction [(1-&gt;4)-N-acetyl-beta-D-glucosaminyl](n) + UDP-N-acetyl-alpha-D-glucosamine = [(1-&gt;4)-N-acetyl-beta-D-glucosaminyl](n+1) + UDP + H(+). In terms of biological role, polymerizes chitin, a structural polymer of the cell wall and septum, by transferring the sugar moiety of UDP-GlcNAc to the non-reducing end of the growing chitin polymer. Plays a crucial role during infection and allows the fungus to overcome the resistance of the plant that checks growth of the pathogen and eventually eliminates it. The protein is Chitin synthase 6 of Mycosarcoma maydis (Corn smut fungus).